The sequence spans 512 residues: Serine--tRNA ligase, cytoplasmic (512 aa).

M1 is subject to N-acetylmethionine. The tract at residues 9 to 61 (RVDKGGDPALIRETQEKRFKDPGLVDQLVKADSEWRRCRFRADNLNKLKNLCS) is interaction with tRNA. Residue S241 is modified to Phosphoserine. Residues T271 and R302 each contribute to the L-serine site. ATP is bound by residues 302-304 (RQE) and 318-321 (VHQF). K323 is modified (N6-acetyllysine). E325 lines the L-serine pocket. 391–394 (ELVS) is a binding site for ATP. Residue N427 coordinates L-serine. The tract at residues 472–512 (KPAPIDQEPSKKQKKQHEGSKKKAKEVTLENQLQNMEVTEA) is disordered. Residues 479-499 (EPSKKQKKQHEGSKKKAKEVT) are compositionally biased toward basic and acidic residues. The short motif at 482–494 (KKQKKQHEGSKKK) is the Nuclear localization signal element. Residues 500-512 (LENQLQNMEVTEA) are compositionally biased toward polar residues.

Belongs to the class-II aminoacyl-tRNA synthetase family. Type-1 seryl-tRNA synthetase subfamily. In terms of assembly, homodimer. The tRNA molecule may bind across the dimer. Interacts with SIRT2. Interacts with METTL6; interaction is required for the tRNA N(3)-methylcytidine methyltransferase activity of METTL6.

It is found in the cytoplasm. It localises to the nucleus. It catalyses the reaction tRNA(Ser) + L-serine + ATP = L-seryl-tRNA(Ser) + AMP + diphosphate + H(+). The enzyme catalyses tRNA(Sec) + L-serine + ATP = L-seryl-tRNA(Sec) + AMP + diphosphate + H(+). It participates in aminoacyl-tRNA biosynthesis; selenocysteinyl-tRNA(Sec) biosynthesis; L-seryl-tRNA(Sec) from L-serine and tRNA(Sec): step 1/1. Functionally, catalyzes the attachment of serine to tRNA(Ser) in a two-step reaction: serine is first activated by ATP to form Ser-AMP and then transferred to the acceptor end of tRNA(Ser). Is probably also able to aminoacylate tRNA(Sec) with serine, to form the misacylated tRNA L-seryl-tRNA(Sec), which will be further converted into selenocysteinyl-tRNA(Sec). In the nucleus, binds to the VEGFA core promoter and prevents MYC binding and transcriptional activation by MYC. Recruits SIRT2 to the VEGFA promoter, promoting deacetylation of histone H4 at 'Lys-16' (H4K16). Thereby, inhibits the production of VEGFA and sprouting angiogenesis mediated by VEGFA. The polypeptide is Serine--tRNA ligase, cytoplasmic (Sars1) (Rattus norvegicus (Rat)).